We begin with the raw amino-acid sequence, 339 residues long: Protein FAM131B (339 aa).

Residues 1–22 (MDSTSSLHGSSLHRPSTEQTRT) are disordered. Residues S47, S114, and S117 each carry the phosphoserine modification. The disordered stretch occupies residues 222–339 (GPAFGDSQPS…PLLTQPSTPA (118 aa)). Composition is skewed to polar residues over residues 239-250 (QPASGYSAQEPS) and 324-339 (PTTS…STPA). T325 bears the Phosphothreonine mark. S327 bears the Phosphoserine mark.

Belongs to the FAM131 family.

This Bos taurus (Bovine) protein is Protein FAM131B (FAM131B).